We begin with the raw amino-acid sequence, 421 residues long: Forkhead box protein fkh-4 (421 aa).

Positions 118-218 form a DNA-binding region, fork-head; sequence RPPISYVALC…SDADFDFFRK (101 aa).

The protein localises to the nucleus. Its function is as follows. Transcription factor. Regulates expression of a class of small RNAs, known as 21U-RNAs, perhaps acting redundantly with fkh-3 and fkh-5. This Caenorhabditis elegans protein is Forkhead box protein fkh-4.